A 505-amino-acid chain; its full sequence is Maturase K (505 aa).

It belongs to the intron maturase 2 family. MatK subfamily.

The protein localises to the plastid. It localises to the chloroplast. Its function is as follows. Usually encoded in the trnK tRNA gene intron. Probably assists in splicing its own and other chloroplast group II introns. This chain is Maturase K, found in Illicium oligandrum (Star anise).